The sequence spans 199 residues: ATP-dependent Clp protease proteolytic subunit (199 aa).

S99 functions as the Nucleophile in the catalytic mechanism. H124 is a catalytic residue.

The protein belongs to the peptidase S14 family. As to quaternary structure, fourteen ClpP subunits assemble into 2 heptameric rings which stack back to back to give a disk-like structure with a central cavity, resembling the structure of eukaryotic proteasomes.

Its subcellular location is the cytoplasm. It catalyses the reaction Hydrolysis of proteins to small peptides in the presence of ATP and magnesium. alpha-casein is the usual test substrate. In the absence of ATP, only oligopeptides shorter than five residues are hydrolyzed (such as succinyl-Leu-Tyr-|-NHMec, and Leu-Tyr-Leu-|-Tyr-Trp, in which cleavage of the -Tyr-|-Leu- and -Tyr-|-Trp bonds also occurs).. Cleaves peptides in various proteins in a process that requires ATP hydrolysis. Has a chymotrypsin-like activity. Plays a major role in the degradation of misfolded proteins. The chain is ATP-dependent Clp protease proteolytic subunit from Lactococcus lactis subsp. lactis (strain IL1403) (Streptococcus lactis).